Here is a 638-residue protein sequence, read N- to C-terminus: Threonine--tRNA ligase (638 aa).

The TGS domain occupies methionine 1–threonine 61. The segment at aspartate 243–proline 535 is catalytic. Residues cysteine 335, histidine 386, and histidine 512 each contribute to the Zn(2+) site.

This sequence belongs to the class-II aminoacyl-tRNA synthetase family. As to quaternary structure, homodimer. It depends on Zn(2+) as a cofactor.

Its subcellular location is the cytoplasm. The enzyme catalyses tRNA(Thr) + L-threonine + ATP = L-threonyl-tRNA(Thr) + AMP + diphosphate + H(+). Catalyzes the attachment of threonine to tRNA(Thr) in a two-step reaction: L-threonine is first activated by ATP to form Thr-AMP and then transferred to the acceptor end of tRNA(Thr). Also edits incorrectly charged L-seryl-tRNA(Thr). The protein is Threonine--tRNA ligase of Pelagibacter ubique (strain HTCC1062).